The chain runs to 100 residues: NADH-quinone oxidoreductase subunit K (100 aa).

Helical transmembrane passes span 2–22, 28–48, and 64–84; these read IPLS…VAGF, IIVM…NLVA, and FVIT…ICLF.

This sequence belongs to the complex I subunit 4L family. As to quaternary structure, NDH-1 is composed of 14 different subunits. Subunits NuoA, H, J, K, L, M, N constitute the membrane sector of the complex.

The protein localises to the cell inner membrane. It catalyses the reaction a quinone + NADH + 5 H(+)(in) = a quinol + NAD(+) + 4 H(+)(out). NDH-1 shuttles electrons from NADH, via FMN and iron-sulfur (Fe-S) centers, to quinones in the respiratory chain. The immediate electron acceptor for the enzyme in this species is believed to be ubiquinone. Couples the redox reaction to proton translocation (for every two electrons transferred, four hydrogen ions are translocated across the cytoplasmic membrane), and thus conserves the redox energy in a proton gradient. This chain is NADH-quinone oxidoreductase subunit K, found in Desulfovibrio desulfuricans (strain ATCC 27774 / DSM 6949 / MB).